We begin with the raw amino-acid sequence, 579 residues long: CTP synthase (579 aa).

The amidoligase domain stretch occupies residues 1–281 (MPALRKHPQT…DAYVVRRLNL (281 aa)). S23 is a CTP binding site. S23 is a UTP binding site. ATP contacts are provided by residues 24 to 29 (SLGKGL) and D81. 2 residues coordinate Mg(2+): D81 and E155. CTP contacts are provided by residues 162–164 (DIE), 202–207 (KTKPTQ), and K238. UTP contacts are provided by residues 202–207 (KTKPTQ) and K238. Residues 306-554 (RIALVGKYID…IGAALDYKAA (249 aa)) enclose the Glutamine amidotransferase type-1 domain. G369 lines the L-glutamine pocket. Residue C396 is the Nucleophile; for glutamine hydrolysis of the active site. L-glutamine-binding positions include 397 to 400 (LGLQ), E419, and R480. Catalysis depends on residues H527 and E529.

Belongs to the CTP synthase family. In terms of assembly, homotetramer.

It carries out the reaction UTP + L-glutamine + ATP + H2O = CTP + L-glutamate + ADP + phosphate + 2 H(+). It catalyses the reaction L-glutamine + H2O = L-glutamate + NH4(+). The catalysed reaction is UTP + NH4(+) + ATP = CTP + ADP + phosphate + 2 H(+). It functions in the pathway pyrimidine metabolism; CTP biosynthesis via de novo pathway; CTP from UDP: step 2/2. With respect to regulation, allosterically activated by GTP, when glutamine is the substrate; GTP has no effect on the reaction when ammonia is the substrate. The allosteric effector GTP functions by stabilizing the protein conformation that binds the tetrahedral intermediate(s) formed during glutamine hydrolysis. Inhibited by the product CTP, via allosteric rather than competitive inhibition. Functionally, catalyzes the ATP-dependent amination of UTP to CTP with either L-glutamine or ammonia as the source of nitrogen. Regulates intracellular CTP levels through interactions with the four ribonucleotide triphosphates. This chain is CTP synthase, found in Mycobacterium sp. (strain JLS).